Here is a 484-residue protein sequence, read N- to C-terminus: Glutamyl-tRNA(Gln) amidotransferase subunit A (484 aa).

Active-site charge relay system residues include Lys-76 and Ser-151. The Acyl-ester intermediate role is filled by Ser-175.

It belongs to the amidase family. GatA subfamily. Heterotrimer of A, B and C subunits.

It carries out the reaction L-glutamyl-tRNA(Gln) + L-glutamine + ATP + H2O = L-glutaminyl-tRNA(Gln) + L-glutamate + ADP + phosphate + H(+). Allows the formation of correctly charged Gln-tRNA(Gln) through the transamidation of misacylated Glu-tRNA(Gln) in organisms which lack glutaminyl-tRNA synthetase. The reaction takes place in the presence of glutamine and ATP through an activated gamma-phospho-Glu-tRNA(Gln). The protein is Glutamyl-tRNA(Gln) amidotransferase subunit A of Thioalkalivibrio sulfidiphilus (strain HL-EbGR7).